A 435-amino-acid polypeptide reads, in one-letter code: Nuclear hormone receptor family member nhr-136 (435 aa).

The segment at residues 50–129 (PSNCKVCRHS…AGMNPSAIQA (80 aa)) is a DNA-binding region (nuclear receptor). 2 NR C4-type zinc fingers span residues 53-73 (CKVCRHSATGYHYDVPSCNGC) and 89-112 (CLKMRKCLSGTEPVDLSRRMCRAC). Residues 194-430 (RDIRKLDELI…RYTRISNLYE (237 aa)) enclose the NR LBD domain.

The protein belongs to the nuclear hormone receptor family.

The protein resides in the nucleus. Orphan nuclear receptor. In Caenorhabditis elegans, this protein is Nuclear hormone receptor family member nhr-136 (nhr-136).